Here is a 429-residue protein sequence, read N- to C-terminus: Histidine--tRNA ligase (429 aa).

Belongs to the class-II aminoacyl-tRNA synthetase family. Homodimer.

Its subcellular location is the cytoplasm. It catalyses the reaction tRNA(His) + L-histidine + ATP = L-histidyl-tRNA(His) + AMP + diphosphate + H(+). In Acidovorax ebreus (strain TPSY) (Diaphorobacter sp. (strain TPSY)), this protein is Histidine--tRNA ligase.